The following is a 333-amino-acid chain: Taste receptor type 2 member 123 (333 aa).

Residues 1–13 (MFSQKINYSHLFT) lie on the Extracellular side of the membrane. N7 is a glycosylation site (N-linked (GlcNAc...) asparagine). Residues 14 to 34 (FSITLYVEIVTGILGHGFIAL) form a helical membrane-spanning segment. Over 35–60 (VNIMDWVKRRRISSVDQILTALALTR) the chain is Cytoplasmic. The chain crosses the membrane as a helical span at residues 61–81 (FIYVLSMLICILLFMLCPHLP). At 82–90 (RRSEMLSAM) the chain is on the extracellular side. Residues 91 to 111 (GIFWVVNSHFSIWLTTCLGVF) traverse the membrane as a helical segment. The Cytoplasmic segment spans residues 112–134 (YFLKIANFSNSFFLYLKWRVKKV). A helical transmembrane segment spans residues 135–155 (ILIIILASLIFLTLHILSLGI). Topologically, residues 156-205 (YDQFSIAAYVGNMSYSLTDLTQFSSTFLFSNSSNVFLITNSSHVFLPINS) are extracellular. Residues N167, N186, and N195 are each glycosylated (N-linked (GlcNAc...) asparagine). Residues 206–226 (LFMLIPFTVSLVAFLMLIFSL) form a helical membrane-spanning segment. The Cytoplasmic portion of the chain corresponds to 227-253 (WKHHKKMQVNAKQPRDVSTMAHIKALQ). The chain crosses the membrane as a helical span at residues 254-274 (TVFSFLLLYAIYLLFLIIGIL). The Extracellular segment spans residues 275-281 (NLGLMEK). A helical membrane pass occupies residues 282 to 302 (IVILIFDHISGAVFPISHSFV). The Cytoplasmic segment spans residues 303–333 (LILGNSKLRQASLSVLPCLRCQSKDMDTMGL).

This sequence belongs to the G-protein coupled receptor T2R family. Expressed in subsets of taste receptor cells of the tongue and palate epithelium and exclusively in gustducin-positive cells. Expressed in the duodenum, antrum and fundus (part of the stomach).

The protein localises to the membrane. Its function is as follows. Gustducin-coupled receptor implicated in the perception of bitter compounds in the oral cavity and the gastrointestinal tract. Signals through PLCB2 and the calcium-regulated cation channel TRPM5. This is Taste receptor type 2 member 123 (Tas2r123) from Mus musculus (Mouse).